The following is a 347-amino-acid chain: Quinolinate synthase (347 aa).

2 residues coordinate iminosuccinate: H47 and S68. C113 lines the [4Fe-4S] cluster pocket. Residues 139 to 141 (YAN) and S156 each bind iminosuccinate. C200 contributes to the [4Fe-4S] cluster binding site. Residues 226 to 228 (HPE) and T243 each bind iminosuccinate. C297 is a [4Fe-4S] cluster binding site.

Belongs to the quinolinate synthase family. Type 1 subfamily. The cofactor is [4Fe-4S] cluster.

The protein localises to the cytoplasm. The catalysed reaction is iminosuccinate + dihydroxyacetone phosphate = quinolinate + phosphate + 2 H2O + H(+). It participates in cofactor biosynthesis; NAD(+) biosynthesis; quinolinate from iminoaspartate: step 1/1. Its function is as follows. Catalyzes the condensation of iminoaspartate with dihydroxyacetone phosphate to form quinolinate. The sequence is that of Quinolinate synthase from Salmonella typhi.